The primary structure comprises 125 residues: Ribonuclease P protein component (125 aa).

It belongs to the RnpA family. Consists of a catalytic RNA component (M1 or rnpB) and a protein subunit.

It catalyses the reaction Endonucleolytic cleavage of RNA, removing 5'-extranucleotides from tRNA precursor.. In terms of biological role, RNaseP catalyzes the removal of the 5'-leader sequence from pre-tRNA to produce the mature 5'-terminus. It can also cleave other RNA substrates such as 4.5S RNA. The protein component plays an auxiliary but essential role in vivo by binding to the 5'-leader sequence and broadening the substrate specificity of the ribozyme. The polypeptide is Ribonuclease P protein component (Oleidesulfovibrio alaskensis (strain ATCC BAA-1058 / DSM 17464 / G20) (Desulfovibrio alaskensis)).